The chain runs to 160 residues: 2-C-methyl-D-erythritol 2,4-cyclodiphosphate synthase (160 aa).

The a divalent metal cation site is built by Asp11 and His13. Residues Asp11–His13 and His37–Ser38 contribute to the 4-CDP-2-C-methyl-D-erythritol 2-phosphate site. His45 provides a ligand contact to a divalent metal cation. Residues Asp59–Gly61 and Arg145 contribute to the 4-CDP-2-C-methyl-D-erythritol 2-phosphate site.

It belongs to the IspF family. Homotrimer. The cofactor is a divalent metal cation.

The catalysed reaction is 4-CDP-2-C-methyl-D-erythritol 2-phosphate = 2-C-methyl-D-erythritol 2,4-cyclic diphosphate + CMP. The protein operates within isoprenoid biosynthesis; isopentenyl diphosphate biosynthesis via DXP pathway; isopentenyl diphosphate from 1-deoxy-D-xylulose 5-phosphate: step 4/6. Functionally, involved in the biosynthesis of isopentenyl diphosphate (IPP) and dimethylallyl diphosphate (DMAPP), two major building blocks of isoprenoid compounds. Catalyzes the conversion of 4-diphosphocytidyl-2-C-methyl-D-erythritol 2-phosphate (CDP-ME2P) to 2-C-methyl-D-erythritol 2,4-cyclodiphosphate (ME-CPP) with a corresponding release of cytidine 5-monophosphate (CMP). This is 2-C-methyl-D-erythritol 2,4-cyclodiphosphate synthase from Neisseria meningitidis serogroup B (strain ATCC BAA-335 / MC58).